Here is a 1577-residue protein sequence, read N- to C-terminus: High molecular weight form of myosin-1 (1577 aa).

Positions 75-751 (KSVDDLVQMD…EQRGLELQRN (677 aa)) constitute a Myosin motor domain. At lysine 119 the chain carries N6,N6,N6-trimethyllysine. 168–175 (GESGAGKT) is an ATP binding site. Actin-binding regions lie at residues 628-650 (LDSLMTALNATEPHYIRCIKPNS) and 730-744 (QVGKTRVLYRAPEQR). An IQ domain is found at 755 to 782 (ERVTIQIQAGVRRMFARRLYKRMRAIKP). In terms of domain architecture, MyTH4 spans 1261–1401 (WTKSPIPTSL…PNVEQILAAK (141 aa)). Disordered stretches follow at residues 1442-1466 (SRPAQARAQPGQQAQPAGAARQQAA) and 1483-1516 (QQQQQQQGYDQQQQAYGGGADYGQQQQQQDLPAE). Low complexity-rich tracts occupy residues 1444-1466 (PAQARAQPGQQAQPAGAARQQAA) and 1483-1497 (QQQQQQQGYDQQQQA). The SH3 domain maps to 1519–1577 (EEYKQVEVVYDYDGGGDAQRLVLVKGAIITVIKEYEGWAYGSTDDGQVGLYPINYTRPI).

Belongs to the TRAFAC class myosin-kinesin ATPase superfamily. Myosin family. Myosin I heavy chain is single-headed.

This is High molecular weight form of myosin-1 from Acanthamoeba castellanii (Amoeba).